A 669-amino-acid chain; its full sequence is MTLLSNILDCGGCISAQRFTRLLRQSGSSGPSPSAPTAGTFESKSMLEPTSSHSLATGRVPLLHDFDASTTESPGTYVLDGVARVAQLALEPTVMDALPDSDTEQVLGNLNSSAPWNLTLASAAATNFENCSALFVNYTLPQTGLYCNWTWDTLLCWPPTPAGVLARMNCPGGFHGVDTRKFAIRKCELDGRWGSRPNATEVNPPGWTDYGPCYKPEIIRLMQQMGSKDFDAYIDIARRTRTLEIVGLCLSLFALIVSLLIFCTFRSLRNNRTKIHKNLFVAMVLQVIIRLTLYLDQFRRGNKEAATNTSLSVIENTPYLCEASYVLLEYARTAMFMWMFIEGLYLHNMVTVAVFQGSFPLKFFSRLGWCVPILMTTVWARCTVMYMDTSLGECLWNYNLTPYYWILEGPRLAVILLNFCFLVNIIRVLVMKLRQSQASDIEQTRKAVRAAIVLLPLLGITNLLHQLAPLKTATNFAVWSYGTHFLTSFQGFFIALIYCFLNGEVRAVLLKSLATQLSVRGHPEWAPKRASMYSGAYNTAPDTDAVQPAGDPSATGKRISPPNKRLNGRKPSSASIVMIHEPQQRQRLMPRLQNKAREKGKDRVEKTDAEAEPDPTISHIHSKEAGSARSRTRGSKWIMGICFRGQKVLRVPSASSVPPESVVFELSEQ.

The Extracellular segment spans residues 1-244 (MTLLSNILDC…DIARRTRTLE (244 aa)). The disordered stretch occupies residues 24 to 52 (RQSGSSGPSPSAPTAGTFESKSMLEPTSS). The segment covering 26–40 (SGSSGPSPSAPTAGT) has biased composition (low complexity). N-linked (GlcNAc...) asparagine glycosylation is found at asparagine 111, asparagine 117, asparagine 130, asparagine 137, asparagine 148, and asparagine 198. A helical transmembrane segment spans residues 245-265 (IVGLCLSLFALIVSLLIFCTF). Residues 266–274 (RSLRNNRTK) lie on the Cytoplasmic side of the membrane. A helical transmembrane segment spans residues 275–295 (IHKNLFVAMVLQVIIRLTLYL). The Extracellular portion of the chain corresponds to 296–334 (DQFRRGNKEAATNTSLSVIENTPYLCEASYVLLEYARTA). Asparagine 308 is a glycosylation site (N-linked (GlcNAc...) asparagine). Residues 335–355 (MFMWMFIEGLYLHNMVTVAVF) form a helical membrane-spanning segment. The Cytoplasmic portion of the chain corresponds to 356 to 366 (QGSFPLKFFSR). The helical transmembrane segment at 367-387 (LGWCVPILMTTVWARCTVMYM) threads the bilayer. At 388-411 (DTSLGECLWNYNLTPYYWILEGPR) the chain is on the extracellular side. The chain crosses the membrane as a helical span at residues 412 to 432 (LAVILLNFCFLVNIIRVLVMK). The Cytoplasmic segment spans residues 433–449 (LRQSQASDIEQTRKAVR). Residues 450–470 (AAIVLLPLLGITNLLHQLAPL) form a helical membrane-spanning segment. The Extracellular portion of the chain corresponds to 471-480 (KTATNFAVWS). A helical transmembrane segment spans residues 481-501 (YGTHFLTSFQGFFIALIYCFL). At 502–669 (NGEVRAVLLK…ESVVFELSEQ (168 aa)) the chain is on the cytoplasmic side. 2 disordered regions span residues 536–573 (AYNT…KPSS) and 590–614 (PRLQ…AEPD). The segment covering 595 to 609 (KAREKGKDRVEKTDA) has biased composition (basic and acidic residues).

Belongs to the G-protein coupled receptor 2 family. As to expression, mainly present in clock neurons of the brain. Localizes in all 4 s-LNv neurons, 1 LNd neuron, 7 DN1 neurons, and 1 DN3 neuron. In addition to the clock neurons, it is also present in approximately 13 pairs of neurons along the ventral nerve cord in third instar larvae, which do not overlap with dopaminergic or serotonergic neurons. Not present in DN2 neurons (at protein level).

Its subcellular location is the cell membrane. Its function is as follows. Receptor for PDF, a neuropeptide controlling circadian behavioral rhythms. Probably regulates circadian behavioral rhythms through coordination of activities of clock neurons. PDF-binding results in the elevation of cAMP synthesis. Plays a role in sleep regulation and regulates the state transition from sleep to wake. This is PDF receptor from Drosophila melanogaster (Fruit fly).